We begin with the raw amino-acid sequence, 81 residues long: Teretoxin Tsu6.8 (81 aa).

Positions 1 to 21 are cleaved as a signal peptide; sequence MATSGRLLCLCLVLGLIFESL. The propeptide occupies 22–45; that stretch reads GHPVMGEKRAGENASPSARSLPKR.

It belongs to the teretoxin M (TM) superfamily. Post-translationally, contains 3 disulfide bonds. In terms of tissue distribution, expressed by the venom duct.

The protein localises to the secreted. This chain is Teretoxin Tsu6.8, found in Terebra subulata (Chocolate spotted auger).